The following is a 41-amino-acid chain: Large ribosomal subunit protein bL36 (41 aa).

Belongs to the bacterial ribosomal protein bL36 family.

This is Large ribosomal subunit protein bL36 from Bradyrhizobium diazoefficiens (strain JCM 10833 / BCRC 13528 / IAM 13628 / NBRC 14792 / USDA 110).